A 185-amino-acid chain; its full sequence is Ribosome-recycling factor (185 aa).

Belongs to the RRF family.

Its subcellular location is the cytoplasm. In terms of biological role, responsible for the release of ribosomes from messenger RNA at the termination of protein biosynthesis. May increase the efficiency of translation by recycling ribosomes from one round of translation to another. The protein is Ribosome-recycling factor of Xanthomonas oryzae pv. oryzae (strain MAFF 311018).